Here is a 273-residue protein sequence, read N- to C-terminus: Protein FAM210A (273 aa).

The span at 97–106 (SSSATSSGPP) shows a compositional bias: low complexity. The disordered stretch occupies residues 97 to 116 (SSSATSSGPPSEKKEDPDPL). Residues 107 to 116 (SEKKEDPDPL) are compositionally biased toward basic and acidic residues. The DUF1279 domain maps to 118–230 (DRSISLYQRF…GYMSTPPPVK (113 aa)). The chain crosses the membrane as a helical span at residues 137–157 (VLIPVHLITSAVWFGTFYYAA). A coiled-coil region spans residues 230-269 (KEYLQDKMEETKELLTEKMEETKDRLTEKLQETKGKVSLK). The interval 247 to 273 (KMEETKDRLTEKLQETKGKVSLKKKVE) is disordered.

Belongs to the FAM210 family. In terms of assembly, interacts with ATAD3A.

It is found in the membrane. The protein localises to the mitochondrion. Its subcellular location is the cytoplasm. Functionally, may play a role in the structure and strength of both muscle and bone. The chain is Protein FAM210A (FAM210A) from Bos taurus (Bovine).